The primary structure comprises 258 residues: NAD kinase (258 aa).

The active-site Proton acceptor is the Asp45. NAD(+) is bound by residues 45-46 (DG), 117-118 (NE), Asp147, Ala155, 158-163 (TAYNYS), and Ala182.

This sequence belongs to the NAD kinase family. Requires a divalent metal cation as cofactor.

The protein localises to the cytoplasm. The catalysed reaction is NAD(+) + ATP = ADP + NADP(+) + H(+). Involved in the regulation of the intracellular balance of NAD and NADP, and is a key enzyme in the biosynthesis of NADP. Catalyzes specifically the phosphorylation on 2'-hydroxyl of the adenosine moiety of NAD to yield NADP. The protein is NAD kinase of Xanthomonas campestris pv. campestris (strain 8004).